Consider the following 447-residue polypeptide: NADH-ubiquinone oxidoreductase chain 4 (447 aa).

Helical transmembrane passes span 28–48 (IFLL…FNYI), 56–76 (MVSY…LMAS), 89–109 (FVFM…SMSV), 110–130 (FMFY…ILGW), 141–161 (VYLL…IFYI), 183–203 (LLYL…LVHL), 213–233 (PVSG…YGLL), 246–266 (YNYW…LVCL), 273–293 (ALIA…LLTM), 298–318 (LTGS…LFCL), 331–351 (LLIN…WFLL), 374–394 (IVSW…FSAA), and 409–431 (YSGV…LHWL).

Belongs to the complex I subunit 4 family.

Its subcellular location is the mitochondrion membrane. The catalysed reaction is a ubiquinone + NADH + 5 H(+)(in) = a ubiquinol + NAD(+) + 4 H(+)(out). Its function is as follows. Core subunit of the mitochondrial membrane respiratory chain NADH dehydrogenase (Complex I) that is believed to belong to the minimal assembly required for catalysis. Complex I functions in the transfer of electrons from NADH to the respiratory chain. The immediate electron acceptor for the enzyme is believed to be ubiquinone. The polypeptide is NADH-ubiquinone oxidoreductase chain 4 (mt:ND4) (Anopheles gambiae (African malaria mosquito)).